The primary structure comprises 2364 residues: Spectrin beta chain, non-erythrocytic 1 (2364 aa).

At Thr-2 the chain carries N-acetylthreonine. Positions Thr-2 to His-275 are actin-binding. Phosphoserine occurs at positions 14 and 36. Calponin-homology (CH) domains lie at Ala-54–Gln-158 and Lys-173–Ser-278. At Lys-90 the chain carries N6-acetyllysine. At Ser-228 the chain carries Phosphoserine. 15 Spectrin repeats span residues Met-303 to Arg-411, Leu-423 to Glu-525, Leu-530 to Glu-636, Arg-639 to Glu-742, Leu-745 to Asp-847, Ala-850 to Leu-952, Ile-957 to Glu-1060, Lys-1063 to Ser-1166, Ala-1170 to Arg-1258, Asp-1276 to Leu-1376, Lys-1381 to Leu-1482, Glu-1486 to Glu-1590, His-1592 to Glu-1696, His-1698 to Leu-1801, and Tyr-1805 to Leu-1907. Phosphoserine is present on residues Ser-817, Ser-825, Ser-903, Ser-1057, Ser-1076, Ser-1079, and Ser-1237. 3 positions are modified to phosphoserine: Ser-1388, Ser-1447, and Ser-1557. The interval Ile-1563 to Glu-2093 is interaction with ANK2. Tyr-1805 carries the post-translational modification Phosphotyrosine. Residues Lys-1815, Lys-1913, and Lys-1989 each carry the N6-acetyllysine modification. Spectrin repeat units follow at residues Phe-1914–Arg-2014 and Glu-2018–Lys-2097. The disordered stretch occupies residues Arg-2089 to Pro-2196. Phosphoserine is present on residues Ser-2102, Ser-2128, and Ser-2138. The segment covering Ser-2115 to Gly-2131 has biased composition (polar residues). Polar residues predominate over residues Val-2145–Pro-2166. At Thr-2147 the chain carries Phosphothreonine. Ser-2148 carries the post-translational modification Phosphoserine. Residues Glu-2149–Lys-2177 are mediates interaction with CAMSAP1. The residue at position 2159 (Thr-2159) is a Phosphothreonine. A phosphoserine mark is found at Ser-2160, Ser-2161, Ser-2164, Ser-2165, and Ser-2169. Thr-2171 carries the post-translational modification Phosphothreonine. A phosphoserine mark is found at Ser-2172 and Ser-2184. Polar residues predominate over residues Ser-2184–Pro-2196. Phosphothreonine is present on residues Thr-2187 and Thr-2195. Residues Ser-2197–Ser-2307 enclose the PH domain. Positions Asp-2309–Lys-2364 are disordered. Phosphoserine is present on residues Ser-2314 and Ser-2319. The span at Ser-2314–Ser-2341 shows a compositional bias: polar residues. Thr-2320 is modified (phosphothreonine). A glycan (O-linked (GlcNAc) serine) is linked at Ser-2324. A Phosphothreonine modification is found at Thr-2328. Residues Ser-2340 and Ser-2341 each carry the phosphoserine modification. Over residues Pro-2342–Phe-2357 the composition is skewed to basic and acidic residues.

This sequence belongs to the spectrin family. As to quaternary structure, interacts with CAMSAP1. Interacts with ANK2. Interacts with CPNE4 (via VWFA domain). Like erythrocyte spectrin, the spectrin-like proteins are capable to form dimers which can further associate to tetramers. Can form heterodimers with SPTAN1. Isoform Short cannot bind to the axonal protein fodaxin. As to expression, isoform 2 is present in brain, lung and kidney (at protein level).

The protein resides in the cytoplasm. Its subcellular location is the cytoskeleton. It localises to the myofibril. The protein localises to the sarcomere. It is found in the m line. The protein resides in the cytosol. Its subcellular location is the cell membrane. In terms of biological role, fodrin, which seems to be involved in secretion, interacts with calmodulin in a calcium-dependent manner and is thus candidate for the calcium-dependent movement of the cytoskeleton at the membrane. Plays a critical role in central nervous system development and function. This chain is Spectrin beta chain, non-erythrocytic 1 (SPTBN1), found in Homo sapiens (Human).